Consider the following 48-residue polypeptide: Large ribosomal subunit protein bL33A (48 aa).

The protein belongs to the bacterial ribosomal protein bL33 family.

This Bacillus mycoides (strain KBAB4) (Bacillus weihenstephanensis) protein is Large ribosomal subunit protein bL33A.